A 415-amino-acid polypeptide reads, in one-letter code: ATP-dependent Clp protease ATP-binding subunit ClpX (415 aa).

In terms of domain architecture, ClpX-type ZB spans Met1 to Pro54. The Zn(2+) site is built by Cys12, Cys15, Cys35, and Cys38. Pro117 to Leu124 lines the ATP pocket.

The protein belongs to the ClpX chaperone family. In terms of assembly, component of the ClpX-ClpP complex. Forms a hexameric ring that, in the presence of ATP, binds to fourteen ClpP subunits assembled into a disk-like structure with a central cavity, resembling the structure of eukaryotic proteasomes.

ATP-dependent specificity component of the Clp protease. It directs the protease to specific substrates. Can perform chaperone functions in the absence of ClpP. This is ATP-dependent Clp protease ATP-binding subunit ClpX from Treponema denticola (strain ATCC 35405 / DSM 14222 / CIP 103919 / JCM 8153 / KCTC 15104).